The primary structure comprises 156 residues: Small ribosomal subunit protein uS17A (156 aa).

Ser2 bears the N-acetylserine mark. Residues Lys15, Lys46, Lys56, Lys57, Lys79, Lys96, Lys105, Lys133, Lys141, and Lys148 each participate in a glycyl lysine isopeptide (Lys-Gly) (interchain with G-Cter in ubiquitin) cross-link.

This sequence belongs to the universal ribosomal protein uS17 family. Component of the small ribosomal subunit (SSU). Mature yeast ribosomes consist of a small (40S) and a large (60S) subunit. The 40S small subunit contains 1 molecule of ribosomal RNA (18S rRNA) and 33 different proteins (encoded by 57 genes). The large 60S subunit contains 3 rRNA molecules (25S, 5.8S and 5S rRNA) and 46 different proteins (encoded by 81 genes). Post-translationally, N-terminally acetylated by acetyltransferase NatA.

It localises to the cytoplasm. Functionally, component of the ribosome, a large ribonucleoprotein complex responsible for the synthesis of proteins in the cell. The small ribosomal subunit (SSU) binds messenger RNAs (mRNAs) and translates the encoded message by selecting cognate aminoacyl-transfer RNA (tRNA) molecules. The large subunit (LSU) contains the ribosomal catalytic site termed the peptidyl transferase center (PTC), which catalyzes the formation of peptide bonds, thereby polymerizing the amino acids delivered by tRNAs into a polypeptide chain. The nascent polypeptides leave the ribosome through a tunnel in the LSU and interact with protein factors that function in enzymatic processing, targeting, and the membrane insertion of nascent chains at the exit of the ribosomal tunnel. In Saccharomyces cerevisiae (strain ATCC 204508 / S288c) (Baker's yeast), this protein is Small ribosomal subunit protein uS17A.